The chain runs to 409 residues: tRNA(Met) cytidine acetate ligase (409 aa).

ATP is bound by residues 7 to 20 (VVEY…HLYH), Gly102, Asn169, and Arg194.

Belongs to the TmcAL family.

It localises to the cytoplasm. It catalyses the reaction cytidine(34) in elongator tRNA(Met) + acetate + ATP = N(4)-acetylcytidine(34) in elongator tRNA(Met) + AMP + diphosphate. Catalyzes the formation of N(4)-acetylcytidine (ac(4)C) at the wobble position of elongator tRNA(Met), using acetate and ATP as substrates. First activates an acetate ion to form acetyladenylate (Ac-AMP) and then transfers the acetyl group to tRNA to form ac(4)C34. The protein is tRNA(Met) cytidine acetate ligase of Clostridium botulinum (strain ATCC 19397 / Type A).